The following is a 460-amino-acid chain: Telomere-binding protein homolog (460 aa).

This sequence belongs to the telombin family.

It localises to the nucleus. It is found in the chromosome. The protein resides in the telomere. Functionally, may bind telomeric T4G4 sequences. The chain is Telomere-binding protein homolog from Euplotes crassus.